The sequence spans 863 residues: DNA mismatch repair protein MutS (863 aa).

607-614 (GPNMAGKS) lines the ATP pocket.

The protein belongs to the DNA mismatch repair MutS family.

Functionally, this protein is involved in the repair of mismatches in DNA. It is possible that it carries out the mismatch recognition step. This protein has a weak ATPase activity. This chain is DNA mismatch repair protein MutS, found in Caldicellulosiruptor saccharolyticus (strain ATCC 43494 / DSM 8903 / Tp8T 6331).